A 268-amino-acid polypeptide reads, in one-letter code: Purine nucleoside phosphorylase (268 aa).

Phosphate contacts are provided by residues Ser-36, His-68, 88–90 (RIH), and Ala-120. Glu-189 provides a ligand contact to a purine D-ribonucleoside. Residue Ser-208 participates in phosphate binding. Asn-231 lines the a purine D-ribonucleoside pocket.

The protein belongs to the PNP/MTAP phosphorylase family. As to quaternary structure, homotrimer.

The enzyme catalyses a purine 2'-deoxy-D-ribonucleoside + phosphate = a purine nucleobase + 2-deoxy-alpha-D-ribose 1-phosphate. Its pathway is purine metabolism; purine nucleoside salvage. Its function is as follows. The purine nucleoside phosphorylases catalyze the phosphorolytic breakdown of the N-glycosidic bond in the beta-(deoxy)ribonucleoside molecules, with the formation of the corresponding free purine bases and pentose-1-phosphate. Cleaves guanosine, inosine, 2'-deoxyguanosine and 2'-deoxyinosine. The protein is Purine nucleoside phosphorylase (punA) of Mycobacterium leprae (strain TN).